A 653-amino-acid chain; its full sequence is Fructose-1,6-bisphosphatase class 3 2 (653 aa).

Belongs to the FBPase class 3 family. The cofactor is Mn(2+).

It carries out the reaction beta-D-fructose 1,6-bisphosphate + H2O = beta-D-fructose 6-phosphate + phosphate. It participates in carbohydrate biosynthesis; gluconeogenesis. This chain is Fructose-1,6-bisphosphatase class 3 2, found in Clostridium beijerinckii (strain ATCC 51743 / NCIMB 8052) (Clostridium acetobutylicum).